A 416-amino-acid polypeptide reads, in one-letter code: Probable glucan 1,3-beta-glucosidase A (416 aa).

The signal sequence occupies residues 1–22; it reads MIFKFSQKALVALYLVVGLAEA. Residue E211 is the Proton donor of the active site. 2 cysteine pairs are disulfide-bonded: C291–C415 and C316–C342. Catalysis depends on E308, which acts as the Nucleophile. A glycan (N-linked (GlcNAc...) asparagine) is linked at N344.

The protein belongs to the glycosyl hydrolase 5 (cellulase A) family. In terms of assembly, monomer. Mn(2+) serves as cofactor.

It localises to the secreted. It carries out the reaction Successive hydrolysis of beta-D-glucose units from the non-reducing ends of (1-&gt;3)-beta-D-glucans, releasing alpha-glucose.. Functionally, beta-glucanases participate in the metabolism of beta-glucan, the main structural component of the cell wall. It could also function biosynthetically as a transglycosylase. The protein is Probable glucan 1,3-beta-glucosidase A (exgA) of Aspergillus fumigatus (strain CBS 144.89 / FGSC A1163 / CEA10) (Neosartorya fumigata).